The sequence spans 245 residues: NAD-dependent protein deacylase 1 (245 aa).

Positions 1–243 constitute a Deacetylase sirtuin-type domain; it reads MDEKLLKTIA…DELVRHVRKA (243 aa). Residue 20 to 39 coordinates NAD(+); sequence GAGVSAESGIPTFRGKDGLW. Substrate-binding residues include Tyr64 and Arg67. NAD(+) is bound at residue 98–101; the sequence is QNVD. Residue His116 is the Proton acceptor of the active site. 4 residues coordinate Zn(2+): Cys124, Cys127, Cys145, and Cys148. NAD(+)-binding positions include 185–187, 211–213, and Ala229; these read GTS and NPD.

This sequence belongs to the sirtuin family. Class III subfamily. Zn(2+) serves as cofactor.

The protein resides in the cytoplasm. The enzyme catalyses N(6)-acetyl-L-lysyl-[protein] + NAD(+) + H2O = 2''-O-acetyl-ADP-D-ribose + nicotinamide + L-lysyl-[protein]. The catalysed reaction is N(6)-succinyl-L-lysyl-[protein] + NAD(+) + H2O = 2''-O-succinyl-ADP-D-ribose + nicotinamide + L-lysyl-[protein]. In terms of biological role, NAD-dependent lysine deacetylase and desuccinylase that specifically removes acetyl and succinyl groups on target proteins. Modulates the activities of several proteins which are inactive in their acylated form. Deacetylates the N-terminal lysine residue of Alba, the major archaeal chromatin protein and that, in turn, increases Alba's DNA binding affinity, thereby repressing transcription. This Archaeoglobus fulgidus (strain ATCC 49558 / DSM 4304 / JCM 9628 / NBRC 100126 / VC-16) protein is NAD-dependent protein deacylase 1.